The chain runs to 201 residues: Adenylyl-sulfate kinase (201 aa).

35 to 42 contributes to the ATP binding site; sequence GLSGSGKS. The active-site Phosphoserine intermediate is serine 109.

This sequence belongs to the APS kinase family.

The enzyme catalyses adenosine 5'-phosphosulfate + ATP = 3'-phosphoadenylyl sulfate + ADP + H(+). Its pathway is sulfur metabolism; hydrogen sulfide biosynthesis; sulfite from sulfate: step 2/3. Its function is as follows. Catalyzes the synthesis of activated sulfate. The sequence is that of Adenylyl-sulfate kinase from Salmonella arizonae (strain ATCC BAA-731 / CDC346-86 / RSK2980).